The chain runs to 184 residues: UPF0397 protein SAOUHSC_03020 (184 aa).

5 helical membrane passes run valine 11 to proline 31, alanine 44 to valine 64, alanine 77 to leucine 97, isoleucine 116 to leucine 136, and glutamine 148 to leucine 168.

This sequence belongs to the UPF0397 family.

Its subcellular location is the cell membrane. This Staphylococcus aureus (strain NCTC 8325 / PS 47) protein is UPF0397 protein SAOUHSC_03020.